Consider the following 136-residue polypeptide: ATP synthase F(0) complex subunit C1, mitochondrial (136 aa).

The N-terminal 61 residues, 1 to 61 (MQTTGALLIS…REFQTSVVSR (61 aa)), are a transit peptide targeting the mitochondrion. Residues 77–97 (VGVAGSGAGIGTVFGSLIIGY) form a helical membrane-spanning segment. Lys-104 is modified (N6,N6,N6-trimethyllysine). A helical transmembrane segment spans residues 112 to 132 (ILGFALSEAMGLFCLMVAFLI).

Belongs to the ATPase C chain family. Homooctamer; the c-ring consists of eight c subunits forming a circle, and each subunit adopts a hairpin shape. Component of the ATP synthase complex composed at least of ATP5F1A/subunit alpha, ATP5F1B/subunit beta, ATP5MC1/subunit c (homooctomer), MT-ATP6/subunit a, MT-ATP8/subunit 8, ATP5ME/subunit e, ATP5MF/subunit f, ATP5MG/subunit g, ATP5MK/subunit k, ATP5MJ/subunit j, ATP5F1C/subunit gamma, ATP5F1D/subunit delta, ATP5F1E/subunit epsilon, ATP5PF/subunit F6, ATP5PB/subunit b, ATP5PD/subunit d, ATP5PO/subunit OSCP. ATP synthase complex consists of a soluble F(1) head domain (subunits alpha(3) and beta(3)) - the catalytic core - and a membrane F(0) domain - the membrane proton channel (subunits c, a, 8, e, f, g, k and j). These two domains are linked by a central stalk (subunits gamma, delta, and epsilon) rotating inside the F1 region and a stationary peripheral stalk (subunits F6, b, d, and OSCP). Interacts with TMEM70 (homooligomer form); this interaction facilitates the oligomer formation of subunit c/ATP5MC1 (c-ring) and the c-ring membrane insertion and also protects ATP5MC1 against intramitochondrial proteolysis. Post-translationally, trimethylated by ATPSCKMT at Lys-104. Methylation is required for proper incorporation of the C subunit into the ATP synthase complex and mitochondrial respiration.

The protein localises to the mitochondrion membrane. It carries out the reaction H(+)(in) = H(+)(out). Functionally, subunit c, of the mitochondrial membrane ATP synthase complex (F(1)F(0) ATP synthase or Complex V) that produces ATP from ADP in the presence of a proton gradient across the membrane which is generated by electron transport complexes of the respiratory chain. ATP synthase complex consist of a soluble F(1) head domain - the catalytic core - and a membrane F(1) domain - the membrane proton channel. These two domains are linked by a central stalk rotating inside the F(1) region and a stationary peripheral stalk. During catalysis, ATP synthesis in the catalytic domain of F(1) is coupled via a rotary mechanism of the central stalk subunits to proton translocation. With the subunit a (MT-ATP6), forms the proton-conducting channel in the F(0) domain, that contains two crucial half-channels (inlet and outlet) that facilitate proton movement from the mitochondrial intermembrane space (IMS) into the matrix. Protons are taken up via the inlet half-channel and released through the outlet half-channel, following a Grotthuss mechanism. The protein is ATP synthase F(0) complex subunit C1, mitochondrial of Ovis aries (Sheep).